A 938-amino-acid polypeptide reads, in one-letter code: Protein O-mannosyl-transferase Tmtc2 (938 aa).

Position 1 (Met1) is a topological domain, cytoplasmic. A helical transmembrane segment spans residues 2 to 22; that stretch reads PSLEPWLWGDSCSWLGMLAML. Topologically, residues 23-34 are extracellular; it reads RLRLHKSNMDFT. The helical transmembrane segment at 35–55 threads the bilayer; that stretch reads CLFCCSLAFVLYLNTLGAGFV. At 56 to 108 the chain is on the cytoplasmic side; it reads YDDRRAILANADVSGGTPWQRSFSNDFWGTPLTDSGSHGSWRPLCVLSFRLNY. A helical membrane pass occupies residues 109 to 129; sequence LIGGGFAPWGFHLVNNLLHCV. Residues 130-139 lie on the Extracellular side of the membrane; the sequence is ATALVVRVAR. Residues 140–160 form a helical membrane-spanning segment; the sequence is TLLASVWAVLAAGALFAAHPI. Over 161–164 the chain is Cytoplasmic; the sequence is HTEA. The chain crosses the membrane as a helical span at residues 165 to 185; it reads VAGVVGRADLAACVCYLLTYL. At 186–208 the chain is on the extracellular side; that stretch reads SYLRHMRWRESGDPRQWLALGAT. The chain crosses the membrane as a helical span at residues 209-229; that stretch reads LILAAAGLLCKETAITALLVC. The Cytoplasmic portion of the chain corresponds to 230-249; it reads ALFDVMRGLSGQVDKQRLRS. The chain crosses the membrane as a helical span at residues 250 to 270; the sequence is VCIVLGALFCMAYCRLVIVPG. Topologically, residues 271–291 are extracellular; that stretch reads PQTAFSSADNPIARTPSAWTR. The chain crosses the membrane as a helical span at residues 292-312; sequence LLTFLYLPVFNLRLLLQPNVL. The Cytoplasmic segment spans residues 313–510; that stretch reads SFDWGMDALP…HACVLIMSLS (198 aa). The interval 450–480 is disordered; the sequence is RSSSSCSNSTNSSSSSSSSSSSSSSSSSSLS. A helical transmembrane segment spans residues 511-531; the sequence is FLALPFLPASNLLFYVGFVVA. Over 532–533 the chain is Extracellular; sequence ER. A helical membrane pass occupies residues 534 to 554; sequence LLYLPSVGFCLLVGYGVSKLM. Over 555–562 the chain is Cytoplasmic; sequence SCNQRTRN. A helical membrane pass occupies residues 563–580; sequence ILLLSFSLLLAAMSLRTL. Over 581 to 938 the chain is Extracellular; sequence RRNADWRDEE…NLAKLGVTNV (358 aa). TPR repeat units follow at residues 602-635, 636-669, 670-703, 715-748, 753-786, 788-821, 822-855, 856-889, and 890-923; these read PKAL…RPNM, ADVH…RPNL, AVAY…DGAA, SSAY…LPGL, EILY…QPNQ, AAHL…APEQ, ASVY…APND, YTLV…RPGD, and AHAH…QPGD. N-linked (GlcNAc...) asparagine glycosylation is present at Asn800.

This sequence belongs to the TMTC family.

Its subcellular location is the membrane. The protein localises to the endoplasmic reticulum. The enzyme catalyses a di-trans,poly-cis-dolichyl beta-D-mannosyl phosphate + L-seryl-[protein] = 3-O-(alpha-D-mannosyl)-L-seryl-[protein] + a di-trans,poly-cis-dolichyl phosphate + H(+). It carries out the reaction a di-trans,poly-cis-dolichyl beta-D-mannosyl phosphate + L-threonyl-[protein] = 3-O-(alpha-D-mannosyl)-L-threonyl-[protein] + a di-trans,poly-cis-dolichyl phosphate + H(+). It participates in protein modification; protein glycosylation. Transfers mannosyl residues to the hydroxyl group of serine or threonine residues. The polypeptide is Protein O-mannosyl-transferase Tmtc2 (Drosophila melanogaster (Fruit fly)).